Here is a 123-residue protein sequence, read N- to C-terminus: Small ribosomal subunit protein uS12c (123 aa).

Positions 9–31 are disordered; that stretch reads RNKRQAAENKTKSPALQRSPQRR.

This sequence belongs to the universal ribosomal protein uS12 family. In terms of assembly, part of the 30S ribosomal subunit.

It localises to the plastid. The protein localises to the chloroplast. With S4 and S5 plays an important role in translational accuracy. Located at the interface of the 30S and 50S subunits. This Spirogyra maxima (Green alga) protein is Small ribosomal subunit protein uS12c (rps12).